The primary structure comprises 496 residues: Galactan beta-1,4-galactosyltransferase GALS1 (496 aa).

Residues 22 to 42 form a helical membrane-spanning segment; it reads IIATLLALSLVMIVWNLPPYY. Residues 232–464 enclose the GT92 domain; the sequence is DYLYCGSSLY…AKKKVTLYNK (233 aa).

The protein belongs to the glycosyltransferase 92 family. In terms of tissue distribution, expressed in root vasculature, mature leaves, trichomes, flowers, siliques and seeds.

Its subcellular location is the golgi apparatus membrane. Involved in the biosynthesis of beta-1,4-galactan. Can transfer galactose residues from UDP-galactose to beta-1,4-galactopentaose in vitro. Forms specifically beta-1,4-galactosyl linkages and can add successive beta-1,4-galactosyl residues to the acceptor. Beta-1,4-galactans are abundant polysaccharides in plant cell walls and are found as side-chain of rhamnogalacturonan I, which is a major component of pectin. The protein is Galactan beta-1,4-galactosyltransferase GALS1 of Arabidopsis thaliana (Mouse-ear cress).